Reading from the N-terminus, the 336-residue chain is Probable allantoicase 2 (336 aa).

This sequence belongs to the allantoicase family.

It carries out the reaction allantoate + H2O = (S)-ureidoglycolate + urea. It functions in the pathway nitrogen metabolism; (S)-allantoin degradation; (S)-ureidoglycolate from allantoate (aminidohydrolase route): step 1/1. This is Probable allantoicase 2 from Burkholderia pseudomallei (strain K96243).